The primary structure comprises 63 residues: Small ribosomal subunit protein eS31 (63 aa).

Zn(2+)-binding residues include C31, C34, C50, and C53. The C4-type zinc-finger motif lies at 31–53 (CPRCGSIMAHHMKPVERWACGKC).

It belongs to the eukaryotic ribosomal protein eS31 family. In terms of assembly, part of the 30S ribosomal subunit. Requires Zn(2+) as cofactor.

The chain is Small ribosomal subunit protein eS31 from Sulfurisphaera tokodaii (strain DSM 16993 / JCM 10545 / NBRC 100140 / 7) (Sulfolobus tokodaii).